The following is a 476-amino-acid chain: Beta-amyrin 28-monooxygenase (476 aa).

A helical membrane pass occupies residues 2-22 (ELLYVCLVCVFVFLVSLLLLY). Cys-421 contacts heme.

This sequence belongs to the cytochrome P450 family. Heme is required as a cofactor. In terms of tissue distribution, specifically expressed in roots.

It is found in the membrane. It carries out the reaction beta-amyrin + 3 reduced [NADPH--hemoprotein reductase] + 3 O2 = oleanolate + 3 oxidized [NADPH--hemoprotein reductase] + 4 H2O + 4 H(+). In terms of biological role, catalyzes the carboxylation of beta-amyrin at the C-28 position to form oleanolate. Catalyzes the carboxylation of alpha-amyrin at the C-28 position to form ursolate. This chain is Beta-amyrin 28-monooxygenase (CYP716A44), found in Solanum lycopersicum (Tomato).